A 237-amino-acid polypeptide reads, in one-letter code: Orotidine 5'-phosphate decarboxylase (237 aa).

Substrate contacts are provided by residues D11, K34, 61–70, T124, R186, Q195, G215, and R216; that span reads DLKLHDIPNT. The Proton donor role is filled by K63.

The protein belongs to the OMP decarboxylase family. Type 1 subfamily. Homodimer.

The catalysed reaction is orotidine 5'-phosphate + H(+) = UMP + CO2. The protein operates within pyrimidine metabolism; UMP biosynthesis via de novo pathway; UMP from orotate: step 2/2. Its function is as follows. Catalyzes the decarboxylation of orotidine 5'-monophosphate (OMP) to uridine 5'-monophosphate (UMP). The polypeptide is Orotidine 5'-phosphate decarboxylase (Lactococcus lactis subsp. cremoris (strain MG1363)).